A 515-amino-acid chain; its full sequence is Fc receptor-like protein 4 (515 aa).

The signal sequence occupies residues 1–19 (MLLWASLLAFAPVCGQSAA). At 20-387 (AHKPVISVHP…RETPGNRDGL (368 aa)) the chain is on the extracellular side. 4 consecutive Ig-like C2-type domains span residues 23-97 (PVIS…NPVR), 102-183 (SDSL…NFKI), 193-271 (PELK…GNIH), and 275-374 (PSLQ…MVLN). 4 disulfide bridges follow: C44/C85, C123/C167, C212/C261, and C310/C359. Residue N374 is glycosylated (N-linked (GlcNAc...) asparagine). The helical transmembrane segment at 388-408 (VAAGATGGLLSALLLAVALLF) threads the bilayer. Residues 409-515 (HCWRRRKSGV…GKISSKDEES (107 aa)) are Cytoplasmic-facing. 3 consecutive short sequence motifs (ITIM motif) follow at residues 449-454 (SLYVDV), 461-466 (LVYSEI), and 491-496 (VVYSEV). Residues 494–515 (SEVKTQHPDNSAGKISSKDEES) are disordered.

In terms of assembly, interacts with PTPN6 and PTPN11. In terms of processing, phosphorylated on cytoplasmic tyrosines upon activation. In terms of tissue distribution, specifically expressed by memory and monocytoid B-cells which populate spleen and lymph nodes. Preferentially expressed in memory B-cells associated with mucosal tissue (at protein level).

Its subcellular location is the cell membrane. In terms of biological role, may function as an inhibitor of the B-cell receptor signaling. May function in the B-cell-mediated immune response. The polypeptide is Fc receptor-like protein 4 (FCRL4) (Homo sapiens (Human)).